We begin with the raw amino-acid sequence, 273 residues long: Proteasome subunit beta (273 aa).

Residues 1 to 19 are compositionally biased toward polar residues; that stretch reads MQESTANKVAANATSSFTE. The segment at 1–23 is disordered; the sequence is MQESTANKVAANATSSFTEHLQR. The propeptide at 1–50 is removed in mature form; by autocatalysis; the sequence is MQESTANKVAANATSSFTEHLQRDRPELLPFNRSGQGSATAAAPLQVPHA. Threonine 51 (nucleophile) is an active-site residue.

Belongs to the peptidase T1B family. The 20S proteasome core is composed of 14 alpha and 14 beta subunits that assemble into four stacked heptameric rings, resulting in a barrel-shaped structure. The two inner rings, each composed of seven catalytic beta subunits, are sandwiched by two outer rings, each composed of seven alpha subunits. The catalytic chamber with the active sites is on the inside of the barrel. Has a gated structure, the ends of the cylinder being occluded by the N-termini of the alpha-subunits. Is capped by the proteasome-associated ATPase, ARC.

Its subcellular location is the cytoplasm. The enzyme catalyses Cleavage of peptide bonds with very broad specificity.. It functions in the pathway protein degradation; proteasomal Pup-dependent pathway. The formation of the proteasomal ATPase ARC-20S proteasome complex, likely via the docking of the C-termini of ARC into the intersubunit pockets in the alpha-rings, may trigger opening of the gate for substrate entry. Interconversion between the open-gate and close-gate conformations leads to a dynamic regulation of the 20S proteasome proteolysis activity. Its function is as follows. Component of the proteasome core, a large protease complex with broad specificity involved in protein degradation. In Pseudarthrobacter chlorophenolicus (strain ATCC 700700 / DSM 12829 / CIP 107037 / JCM 12360 / KCTC 9906 / NCIMB 13794 / A6) (Arthrobacter chlorophenolicus), this protein is Proteasome subunit beta.